We begin with the raw amino-acid sequence, 448 residues long: Ribosome biogenesis protein YTM1 (448 aa).

The segment at 5–86 (TSNQAVVFST…EETLEIEYIE (82 aa)) is ubiquitin-like (UBL) domain. WD repeat units follow at residues 98–136 (PHESWVSAVSCSLPTHFLTTAYDGHLRAFDLSKNVTLDA), 191–230 (LHTAPVSSIAANPSGTQLLTSSWDSLIGVWDTTIPPKHEV), 271–309 (SHIGRVSKVAWLSPTQGVSCGFDSTLRTWDVERGLCTRT), 312–351 (ASEKPFLDLAVNVENQTALTVSTDRTMTLYDLRTEEALSA), 357–397 (LHPA…AAIS), and 403–439 (DGTKKVLAVDWKRGVIGIGGEGGLDVWKVGLENETQG). Positions 225 to 261 (PPKHEVPEPTITAADQRTKKRRKVDPSSGDSSSPTAI) are disordered.

This sequence belongs to the WD repeat WDR12/YTM1 family. In terms of assembly, component of the NOP7 complex, composed of ERB1, NOP7 and YTM1. The complex is held together by ERB1, which interacts with NOP7 via its N-terminal domain and with YTM1 via a high-affinity interaction between the seven-bladed beta-propeller domains of the 2 proteins. The NOP7 complex associates with the 66S pre-ribosome. Interacts (via UBL domain) with MDN1 (via VWFA/MIDAS domain).

It localises to the nucleus. It is found in the nucleolus. The protein resides in the nucleoplasm. Component of the NOP7 complex, which is required for maturation of the 25S and 5.8S ribosomal RNAs and formation of the 60S ribosome. The protein is Ribosome biogenesis protein YTM1 of Coprinopsis cinerea (strain Okayama-7 / 130 / ATCC MYA-4618 / FGSC 9003) (Inky cap fungus).